Reading from the N-terminus, the 308-residue chain is Methionyl-tRNA formyltransferase (308 aa).

110-113 serves as a coordination point for (6S)-5,6,7,8-tetrahydrofolate; that stretch reads SLLP.

The protein belongs to the Fmt family.

It carries out the reaction L-methionyl-tRNA(fMet) + (6R)-10-formyltetrahydrofolate = N-formyl-L-methionyl-tRNA(fMet) + (6S)-5,6,7,8-tetrahydrofolate + H(+). Attaches a formyl group to the free amino group of methionyl-tRNA(fMet). The formyl group appears to play a dual role in the initiator identity of N-formylmethionyl-tRNA by promoting its recognition by IF2 and preventing the misappropriation of this tRNA by the elongation apparatus. In Neisseria meningitidis serogroup B (strain ATCC BAA-335 / MC58), this protein is Methionyl-tRNA formyltransferase.